The sequence spans 453 residues: Exopolyphosphatase PRUNE1 (453 aa).

An N-acetylmethionine modification is found at methionine 1. Positions 28, 30, 106, and 179 each coordinate Mn(2+). Positions aspartate 106 to histidine 108 match the DHH motif motif. Positions serine 393–proline 420 are essential for homodimerization. The segment at isoleucine 395–leucine 421 is disordered. Serine 399 carries the phosphoserine modification. Position 410 is a phosphothreonine (threonine 410). Serine 414 is modified (phosphoserine).

It belongs to the PPase class C family. Prune subfamily. As to quaternary structure, homooligomer. Able to homodimerize via its C-terminal domain. Interacts with NME1. Interacts with GSK3; at focal adhesion complexes where paxillin and vinculin are colocalized. Interacts with alpha and beta tubulin. Mn(2+) serves as cofactor. As to expression, ubiquitously expressed. Seems to be overexpressed in aggressive sarcoma subtypes, such as leiomyosarcomas and malignant fibrous histiocytomas (MFH) as well as in the less malignant liposarcomas.

It is found in the cytoplasm. The protein resides in the nucleus. It localises to the cell junction. The protein localises to the focal adhesion. It carries out the reaction diphosphate + H2O = 2 phosphate + H(+). With respect to regulation, activated by magnesium ions and inhibited by manganese ions. Inhibited by dipyridamole, moderately sensitive to IBMX and inhibited by vinpocetine. Phosphodiesterase (PDE) that has higher activity toward cAMP than cGMP, as substrate. Plays a role in cell proliferation, migration and differentiation, and acts as a negative regulator of NME1. Plays a role in the regulation of neurogenesis. Involved in the regulation of microtubule polymerization. This chain is Exopolyphosphatase PRUNE1, found in Homo sapiens (Human).